Consider the following 652-residue polypeptide: tRNA-guanine(15) transglycosylase (652 aa).

The Nucleophile role is filled by aspartate 88. The substrate site is built by aspartate 123 and alanine 194. Residues cysteine 280, cysteine 282, and cysteine 285 each coordinate Zn(2+). The PUA domain occupies lysine 577–lysine 652.

This sequence belongs to the archaeosine tRNA-ribosyltransferase family. Zn(2+) serves as cofactor.

The catalysed reaction is guanosine(15) in tRNA + 7-cyano-7-deazaguanine = 7-cyano-7-carbaguanosine(15) in tRNA + guanine. It functions in the pathway tRNA modification; archaeosine-tRNA biosynthesis. Exchanges the guanine residue with 7-cyano-7-deazaguanine (preQ0) at position 15 in the dihydrouridine loop (D-loop) of archaeal tRNAs. The protein is tRNA-guanine(15) transglycosylase of Methanococcus aeolicus (strain ATCC BAA-1280 / DSM 17508 / OCM 812 / Nankai-3).